Here is a 509-residue protein sequence, read N- to C-terminus: Zinc metalloproteinase aureolysin (509 aa).

Residues 1–27 form the signal peptide; the sequence is MRKFSRYAFTSMATVTLLSSLTPAALA. Positions 28–208 are excised as a propeptide; that stretch reads SDTNHKPATS…VVEKTNLVKE (181 aa). Residue Asp-348 participates in Ca(2+) binding. His-352 is a binding site for Zn(2+). Residue Glu-353 is part of the active site. Zn(2+) is bound by residues His-356 and Glu-376. Residues Asp-387, Glu-389, Asp-390, Leu-392, Glu-395, Tyr-398, Thr-399, Lys-402, and Asp-405 each coordinate Ca(2+). His-436 (proton donor) is an active-site residue.

It belongs to the peptidase M4 family. In terms of assembly, monomer. Ca(2+) serves as cofactor. Requires Zn(2+) as cofactor.

It carries out the reaction Cleavage of insulin B chain with specificity similar to that of thermolysin, preferring hydrophobic P1' residues. Activates the glutamyl endopeptidase (EC 3.4.21.19) of Staphylococcus aureus.. In terms of biological role, plays an essential role in immune evasion by helping bacteria to resist complement-mediated killing by neutrophils. Inhibits the deposition of host C3b on bacterial surfaces and the release of the chemoattractant C5a by cleaving the central complement protein C3. The cleavage site renders the C3b molecule vulnerable to proteolytic degradation by host regulators. Cleaves and inactivates host SERPINA1, which is an endogenous protease inhibitor essential for controlling neutrophil serine protease elastase. Also plays an essential role in the cleavage and subsequent activation of the serine protease SspA (glutamyl endopeptidase) which is involved in colonization and infection of human tissues. This is Zinc metalloproteinase aureolysin from Staphylococcus aureus.